Here is a 490-residue protein sequence, read N- to C-terminus: Type I restriction enzyme EcoEI methylase subunit (490 aa).

S-adenosyl-L-methionine is bound by residues 163-168, 193-195, and Glu226; these read EFYTPR and TGG.

The protein belongs to the N(4)/N(6)-methyltransferase family. As to quaternary structure, the type I restriction/modification system is composed of three polypeptides R, M and S; the restriction enzyme has stoichiometry R(2)M(2)S(1) while the methyltransferase is M(2)S(1).

The enzyme catalyses a 2'-deoxyadenosine in DNA + S-adenosyl-L-methionine = an N(6)-methyl-2'-deoxyadenosine in DNA + S-adenosyl-L-homocysteine + H(+). The subtype gamma methyltransferase (M) subunit of a type I restriction enzyme. The M and S subunits together form a methyltransferase (MTase) that methylates two adenine residues of the sequence 5'-GAGN(7)ATGC-3'. In the presence of the R subunit the complex can also act as an endonuclease, binding to the same target sequence but cutting the DNA some distance from this site. Whether the DNA is cut or modified depends on the methylation state of the target sequence. When the target site is unmodified, the DNA is cut. When the target site is hemimethylated, the complex acts as a maintenance MTase modifying the DNA so that both strands become methylated. After locating a non-methylated recognition site, the enzyme complex serves as a molecular motor that translocates DNA in an ATP-dependent manner until a collision occurs that triggers cleavage. This Escherichia coli protein is Type I restriction enzyme EcoEI methylase subunit (hsdM).